Here is a 333-residue protein sequence, read N- to C-terminus: Fe-S cluster assembly protein dre2 (333 aa).

Positions 1-29 are disordered; the sequence is MSPITLDLTSDFNPANTTGAGSSSSQPRT. Residues 7-28 show a composition bias toward polar residues; the sequence is DLTSDFNPANTTGAGSSSSQPR. Residues 23–158 are N-terminal SAM-like domain; that stretch reads SSSQPRTLLV…KPDYAEEEAV (136 aa). The linker stretch occupies residues 159 to 225; it reads PLRFGLKRKT…EDTLLTEADL (67 aa). Residues C235, C246, C249, and C251 each coordinate [2Fe-2S] cluster. The fe-S binding site A stretch occupies residues 235-251; sequence CQPKPGKKRRACKDCTC. Positions 296, 299, 307, and 310 each coordinate [4Fe-4S] cluster. 2 consecutive short sequence motifs (cx2C motif) follow at residues 296-299 and 307-310; these read CGSC and CAGC. Residues 296–310 are fe-S binding site B; the sequence is CGSCALGDAFRCAGC.

The protein belongs to the anamorsin family. In terms of assembly, monomer. Interacts with tah18. Interacts with mia40. [2Fe-2S] cluster serves as cofactor. The cofactor is [4Fe-4S] cluster.

Its subcellular location is the cytoplasm. It localises to the mitochondrion intermembrane space. Functionally, component of the cytosolic iron-sulfur (Fe-S) protein assembly (CIA) machinery required for the maturation of extramitochondrial Fe-S proteins. Part of an electron transfer chain functioning in an early step of cytosolic Fe-S biogenesis, facilitating the de novo assembly of a [4Fe-4S] cluster on the scaffold complex cfd1-nbp35. Electrons are transferred to dre2 from NADPH via the FAD- and FMN-containing protein tah18. Tah18-dre2 are also required for the assembly of the diferric tyrosyl radical cofactor of ribonucleotide reductase (RNR), probably by providing electrons for reduction during radical cofactor maturation in the catalytic small subunit rnr2. The chain is Fe-S cluster assembly protein dre2 from Neurospora crassa (strain ATCC 24698 / 74-OR23-1A / CBS 708.71 / DSM 1257 / FGSC 987).